The chain runs to 88 residues: Metastasis-suppressor KiSS-1 (88 aa).

Positions 1–13 are enriched in polar residues; the sequence is SVENSRPTGQQLE. Residues 1-88 are disordered; that stretch reads SVENSRPTGQ…REKDLPNYNW (88 aa). The span at 33 to 55 shows a compositional bias: low complexity; that stretch reads SATARLSRRGASLSSPAESSGSP. The span at 78 to 88 shows a compositional bias: basic and acidic residues; it reads QREKDLPNYNW. Residue Tyr86 is modified to Phosphotyrosine.

The protein belongs to the KISS1 family. In the hypothalamus, expression increases with puberty in both male and female monkeys. Robust expression in the region of the arcuate nucleus (ARC).

It localises to the secreted. In terms of biological role, metastasis suppressor protein. May regulate events downstream of cell-matrix adhesion, perhaps involving cytoskeletal reorganization. Generates a C-terminally amidated peptide, metastin which functions as the endogenous ligand of the G-protein coupled receptor GPR54. The receptor is essential for normal gonadotropin-released hormone physiology and for puberty. The hypothalamic KiSS1/GPR54 system is a pivotal factor in central regulation of the gonadotropic axis at puberty and in adulthood. The chain is Metastasis-suppressor KiSS-1 (KISS1) from Macaca mulatta (Rhesus macaque).